Here is a 431-residue protein sequence, read N- to C-terminus: MLSDQVTTAELHPSAPLTECETGIYHTFCPISCVAWLYQRVEDSFFLVIGTKTCGYFLQNALGVMIFAEPRYAMAELEEGDISAQFNDYHELRRLCVQIQQDRHPSVIVWIGTCTTEIIKMDLEGMAPTLQAEIGIPIVVARANGLDYAFTQGEDTVLAAMAQRCPDWTPDRTATQSTSSPPLVIFGSVPATVVSQLTFELQRQKVEVTGWLPSARYADLPAVGEDVYACGVNPFLSRTAITLMRRRRCKMIGSPFPIGPDGTRAWIEKICHVFGLETTGLAERERQVWSQLEDYLSLVRGKSAFLMGDNLLEISLARFLIRCGMIVHEVGIPYMDARFQAAELHLLMRTCEAAHVPMPRIVTKPDNFYQVQRMRDVQPDLAITGMAHANPLEARGTGTKWSVELTFWQLHGFASAKDLLELVTRPLRRTH.

[4Fe-4S] cluster is bound by residues Cys-29, Cys-54, and Cys-114.

The protein belongs to the BchN/ChlN family. In terms of assembly, protochlorophyllide reductase is composed of three subunits; ChlL, ChlN and ChlB. Forms a heterotetramer of two ChlB and two ChlN subunits. Requires [4Fe-4S] cluster as cofactor.

It is found in the plastid. Its subcellular location is the chloroplast. It catalyses the reaction chlorophyllide a + oxidized 2[4Fe-4S]-[ferredoxin] + 2 ADP + 2 phosphate = protochlorophyllide a + reduced 2[4Fe-4S]-[ferredoxin] + 2 ATP + 2 H2O. It participates in porphyrin-containing compound metabolism; chlorophyll biosynthesis (light-independent). In terms of biological role, component of the dark-operative protochlorophyllide reductase (DPOR) that uses Mg-ATP and reduced ferredoxin to reduce ring D of protochlorophyllide (Pchlide) to form chlorophyllide a (Chlide). This reaction is light-independent. The NB-protein (ChlN-ChlB) is the catalytic component of the complex. The protein is Light-independent protochlorophyllide reductase subunit N of Nephroselmis olivacea (Green alga).